Reading from the N-terminus, the 230-residue chain is Cytidylate kinase (230 aa).

Residue 12–20 coordinates ATP; sequence GPSGAGKGT.

This sequence belongs to the cytidylate kinase family. Type 1 subfamily.

It localises to the cytoplasm. It catalyses the reaction CMP + ATP = CDP + ADP. The enzyme catalyses dCMP + ATP = dCDP + ADP. In Shewanella putrefaciens (strain CN-32 / ATCC BAA-453), this protein is Cytidylate kinase.